The following is a 119-amino-acid chain: Dihydroneopterin aldolase (119 aa).

Substrate contacts are provided by residues glutamate 21, tyrosine 53, and 72 to 73; that span reads VE. The active-site Proton donor/acceptor is the lysine 98.

This sequence belongs to the DHNA family.

The enzyme catalyses 7,8-dihydroneopterin = 6-hydroxymethyl-7,8-dihydropterin + glycolaldehyde. Its pathway is cofactor biosynthesis; tetrahydrofolate biosynthesis; 2-amino-4-hydroxy-6-hydroxymethyl-7,8-dihydropteridine diphosphate from 7,8-dihydroneopterin triphosphate: step 3/4. Its function is as follows. Catalyzes the conversion of 7,8-dihydroneopterin to 6-hydroxymethyl-7,8-dihydropterin. The sequence is that of Dihydroneopterin aldolase (folB) from Streptomyces coelicolor (strain ATCC BAA-471 / A3(2) / M145).